Here is a 433-residue protein sequence, read N- to C-terminus: Ligand-dependent corepressor (433 aa).

The segment at 1 to 51 (MQRMIQQFAAEYTSKNSSTQDPSQPNSTKNQSLPKASPVTTSPTAATTQNP) is disordered. Positions 13–34 (TSKNSSTQDPSQPNSTKNQSLP) are enriched in polar residues. Over residues 36-48 (ASPVTTSPTAATT) the composition is skewed to low complexity. Ser-42 bears the Phosphoserine mark. An Interaction with nuclear receptors motif is present at residues 53-57 (LSKLL). Ser-63 is subject to Phosphoserine. The segment at 64 to 147 (PLDLTVRKSQ…GTREGFGHST (84 aa)) is disordered. The span at 93-110 (AGSTSLSHSPGCSSTQGN) shows a compositional bias: polar residues. Ser-249 carries the post-translational modification Phosphoserine. Lys-254 is covalently cross-linked (Glycyl lysine isopeptide (Lys-Gly) (interchain with G-Cter in SUMO2)). The tract at residues 299–348 (QSRKSMLDAGPDSWGSDAEQSTSGQPYPTSDQEGDPGSKQPRKKRGRYRQ) is disordered. Residues 316 to 329 (AEQSTSGQPYPTSD) are compositionally biased toward polar residues. Positions 339-345 (PRKKRGR) match the Nuclear localization signal motif. Residues 340–392 (RKKRGRYRQYNSEILEEAISVVMSGKMSVSKAQSIYGIPHSTLEYKVKERLGT) form the HTH psq-type domain. Arg-345 is covalently cross-linked (Glycyl lysine isopeptide (Lys-Gly) (interchain with G-Cter in SUMO2)). A DNA-binding region (H-T-H motif) is located at residues 368–388 (VSKAQSIYGIPHSTLEYKVKE). Residue Gly-391 forms a Glycyl lysine isopeptide (Lys-Gly) (interchain with G-Cter in SUMO2) linkage. Residues 393–412 (LKNPPKKKMKLMRSEGPDVS) form a disordered region. Lys-414 is covalently cross-linked (Glycyl lysine isopeptide (Lys-Gly) (interchain with G-Cter in SUMO2)).

Interacts with ESR1 and ESR2 in the presence of estradiol. Interacts with CTBP1, HDAC3 and HDAC6. Component of a large corepressor complex that contains about 20 proteins, including CTBP1, CTBP2, HDAC1 and HDAC2. In terms of tissue distribution, ubiquitous.

The protein localises to the nucleus. Its function is as follows. May act as transcription activator that binds DNA elements with the sequence 5'-CCCTATCGATCGATCTCTACCT-3'. Repressor of ligand-dependent transcription activation by target nuclear receptors. Repressor of ligand-dependent transcription activation by ESR1, ESR2, NR3C1, PGR, RARA, RARB, RARG, RXRA and VDR. The protein is Ligand-dependent corepressor of Homo sapiens (Human).